Here is a 552-residue protein sequence, read N- to C-terminus: MTELSIRPEEIRDALREYVDSFQATSAGREEVGRVVVTGDGIARVEGLPHTMTNELLEFHGGVLGLALNLEVGEIGTVILGESENIEEGQEVRRTGQILSAPVGDGFLGRVVDPLGRPIDGLGEIVAEGSRELELQAPTVVQRQPVKEPLQTGIKAIDAMTAIGRGQRQLIIGDRQTGKTTVAIDAIINQRDNWTSGDPSKQVKCVYVAIGQKKSTIREVVNSLEEAGALAYTTIVAAPADEPAGFKYIAPYTGSAIAQHWMYNGQHALIVFDDLTKQAEAYRAISLLLRRPPGREAYPGDVFYLHSRLLERCAKLSDELGGGSLTGLPIIETKANDISAYIPTNVISITDGQVFLESDLFNQGVRPAINVGTSVSRVGGSAQVKAMKSVAGRLRLDLAQYRELEAFSAFGSDLDKASRDQLARGARLVELLKQPQGQPFPVERQVVSIWAGTTGKLDDVPVADIRRFESEFLDFVGRSYPGVYDAIVTTGKLSDDTIAMLESAVAEFKKQFTLSDGKPLVNEPAPSPLDPGLVRQESIPVHRPAARKDDEG.

An ATP-binding site is contributed by 173–180 (GDRQTGKT). Positions 516-552 (DGKPLVNEPAPSPLDPGLVRQESIPVHRPAARKDDEG) are disordered.

It belongs to the ATPase alpha/beta chains family. In terms of assembly, F-type ATPases have 2 components, CF(1) - the catalytic core - and CF(0) - the membrane proton channel. CF(1) has five subunits: alpha(3), beta(3), gamma(1), delta(1), epsilon(1). CF(0) has three main subunits: a(1), b(2) and c(9-12). The alpha and beta chains form an alternating ring which encloses part of the gamma chain. CF(1) is attached to CF(0) by a central stalk formed by the gamma and epsilon chains, while a peripheral stalk is formed by the delta and b chains.

It localises to the cell membrane. The catalysed reaction is ATP + H2O + 4 H(+)(in) = ADP + phosphate + 5 H(+)(out). In terms of biological role, produces ATP from ADP in the presence of a proton gradient across the membrane. The alpha chain is a regulatory subunit. This Frankia casuarinae (strain DSM 45818 / CECT 9043 / HFP020203 / CcI3) protein is ATP synthase subunit alpha.